We begin with the raw amino-acid sequence, 476 residues long: Membrane-bound lytic murein transglycosylase F (476 aa).

The signal sequence occupies residues 1–15 (MRSFLLILFCVSLLT). Residues 16–258 (GCQGERVDAA…HLNEKYFAHV (243 aa)) form a non-LT domain region. Residues 259–476 (KRFDYVDTRA…QSEISAAQPN (218 aa)) are LT domain. Glu303 is an active-site residue. Residues 456–476 (EAQQQTAEKQSQSEISAAQPN) form a disordered region.

In the N-terminal section; belongs to the bacterial solute-binding protein 3 family. The protein in the C-terminal section; belongs to the transglycosylase Slt family.

The protein localises to the cell outer membrane. The catalysed reaction is Exolytic cleavage of the (1-&gt;4)-beta-glycosidic linkage between N-acetylmuramic acid (MurNAc) and N-acetylglucosamine (GlcNAc) residues in peptidoglycan, from either the reducing or the non-reducing ends of the peptidoglycan chains, with concomitant formation of a 1,6-anhydrobond in the MurNAc residue.. Functionally, murein-degrading enzyme that degrades murein glycan strands and insoluble, high-molecular weight murein sacculi, with the concomitant formation of a 1,6-anhydromuramoyl product. Lytic transglycosylases (LTs) play an integral role in the metabolism of the peptidoglycan (PG) sacculus. Their lytic action creates space within the PG sacculus to allow for its expansion as well as for the insertion of various structures such as secretion systems and flagella. The chain is Membrane-bound lytic murein transglycosylase F from Shewanella loihica (strain ATCC BAA-1088 / PV-4).